The following is a 373-amino-acid chain: Anhydro-N-acetylmuramic acid kinase (373 aa).

13-20 (GTSMDGID) provides a ligand contact to ATP.

Belongs to the anhydro-N-acetylmuramic acid kinase family.

It catalyses the reaction 1,6-anhydro-N-acetyl-beta-muramate + ATP + H2O = N-acetyl-D-muramate 6-phosphate + ADP + H(+). It functions in the pathway amino-sugar metabolism; 1,6-anhydro-N-acetylmuramate degradation. Its pathway is cell wall biogenesis; peptidoglycan recycling. Catalyzes the specific phosphorylation of 1,6-anhydro-N-acetylmuramic acid (anhMurNAc) with the simultaneous cleavage of the 1,6-anhydro ring, generating MurNAc-6-P. Is required for the utilization of anhMurNAc either imported from the medium or derived from its own cell wall murein, and thus plays a role in cell wall recycling. The polypeptide is Anhydro-N-acetylmuramic acid kinase (Brucella abortus (strain 2308)).